Here is a 672-residue protein sequence, read N- to C-terminus: uncharacterized protein (672 aa).

Residues 1 to 24 form the signal peptide; sequence MKTLKTLKIFIIICIASVSLASFA. 6 helical membrane passes run 226–246, 254–274, 410–430, 436–456, 469–489, and 562–582; these read IIGA…ALNK, IALF…LGPL, IILA…LYFI, CMIT…MALF, VCIS…LLIT, and VVSI…FYYF. Residues 626 to 672 are disordered; it reads ASQGKPSVGDKPDVGGKRKEGEQQGGDSESGAGGGLADLASGSGGGK. Over residues 633-647 the composition is skewed to basic and acidic residues; the sequence is VGDKPDVGGKRKEGE. Gly residues predominate over residues 656 to 672; sequence GAGGGLADLASGSGGGK.

This sequence belongs to the TrbL/VirB6 family.

The protein resides in the cell membrane. This is an uncharacterized protein from Rickettsia felis (strain ATCC VR-1525 / URRWXCal2) (Rickettsia azadi).